The sequence spans 78 residues: Ferredoxin oxidoreductase 2 subunit ForD (78 aa).

2 4Fe-4S ferredoxin-type domains span residues 3-35 and 37-66; these read FVAD…FKAS and NSAW…HCIE. [4Fe-4S] cluster contacts are provided by Cys-12, Cys-17, Cys-20, Cys-24, Cys-46, Cys-49, Cys-52, and Cys-56.

As to quaternary structure, heterotetramer of one alpha, one beta, one delta and one gamma chain. [4Fe-4S] cluster is required as a cofactor.

The protein is Ferredoxin oxidoreductase 2 subunit ForD (forD2) of Aquifex aeolicus (strain VF5).